Here is a 363-residue protein sequence, read N- to C-terminus: Fructose-bisphosphate aldolase C (363 aa).

Tyr-5 carries the phosphotyrosine modification. Ser-36, Ser-39, and Ser-45 each carry phosphoserine. Arg-56 lines the substrate pocket. The residue at position 111 (Lys-111) is an N6-acetyllysine. Lys-147 serves as a coordination point for substrate. Glu-188 functions as the Proton acceptor in the catalytic mechanism. The active-site Schiff-base intermediate with dihydroxyacetone-P is the Lys-230.

The protein belongs to the class I fructose-bisphosphate aldolase family. Homotetramer. Interacts with ATP6V1E1. As to expression, expressed exclusively in Purkinje cells in bands running from anterior to posterior across most of the cerebellum. Expressed at higher levels in the brains of BSE-infected animals.

It catalyses the reaction beta-D-fructose 1,6-bisphosphate = D-glyceraldehyde 3-phosphate + dihydroxyacetone phosphate. It participates in carbohydrate degradation; glycolysis; D-glyceraldehyde 3-phosphate and glycerone phosphate from D-glucose: step 4/4. This chain is Fructose-bisphosphate aldolase C (Aldoc), found in Mus musculus (Mouse).